The sequence spans 300 residues: Aspartate carbamoyltransferase catalytic subunit (300 aa).

Arginine 54 and threonine 55 together coordinate carbamoyl phosphate. Residue lysine 82 coordinates L-aspartate. 3 residues coordinate carbamoyl phosphate: arginine 104, histidine 131, and glutamine 134. 2 residues coordinate L-aspartate: arginine 164 and arginine 213. Residues alanine 256 and proline 257 each coordinate carbamoyl phosphate.

This sequence belongs to the aspartate/ornithine carbamoyltransferase superfamily. ATCase family. As to quaternary structure, heterododecamer (2C3:3R2) of six catalytic PyrB chains organized as two trimers (C3), and six regulatory PyrI chains organized as three dimers (R2).

It catalyses the reaction carbamoyl phosphate + L-aspartate = N-carbamoyl-L-aspartate + phosphate + H(+). It participates in pyrimidine metabolism; UMP biosynthesis via de novo pathway; (S)-dihydroorotate from bicarbonate: step 2/3. Catalyzes the condensation of carbamoyl phosphate and aspartate to form carbamoyl aspartate and inorganic phosphate, the committed step in the de novo pyrimidine nucleotide biosynthesis pathway. This is Aspartate carbamoyltransferase catalytic subunit from Malacoplasma penetrans (strain HF-2) (Mycoplasma penetrans).